The primary structure comprises 260 residues: Phosphate import ATP-binding protein PstB (260 aa).

One can recognise an ABC transporter domain in the interval 14–255; it reads IETENLNLFY…PKNTKTEEYI (242 aa). ATP is bound at residue 46–53; sequence GPSGCGKS.

Belongs to the ABC transporter superfamily. Phosphate importer (TC 3.A.1.7) family. As to quaternary structure, the complex is composed of two ATP-binding proteins (PstB), two transmembrane proteins (PstC and PstA) and a solute-binding protein (PstS).

The protein resides in the cell inner membrane. The catalysed reaction is phosphate(out) + ATP + H2O = ADP + 2 phosphate(in) + H(+). Functionally, part of the ABC transporter complex PstSACB involved in phosphate import. Responsible for energy coupling to the transport system. The chain is Phosphate import ATP-binding protein PstB from Borreliella afzelii (strain PKo) (Borrelia afzelii).